Reading from the N-terminus, the 216-residue chain is ATP phosphoribosyltransferase (216 aa).

Belongs to the ATP phosphoribosyltransferase family. Short subfamily. Heteromultimer composed of HisG and HisZ subunits.

It localises to the cytoplasm. The enzyme catalyses 1-(5-phospho-beta-D-ribosyl)-ATP + diphosphate = 5-phospho-alpha-D-ribose 1-diphosphate + ATP. Its pathway is amino-acid biosynthesis; L-histidine biosynthesis; L-histidine from 5-phospho-alpha-D-ribose 1-diphosphate: step 1/9. Catalyzes the condensation of ATP and 5-phosphoribose 1-diphosphate to form N'-(5'-phosphoribosyl)-ATP (PR-ATP). Has a crucial role in the pathway because the rate of histidine biosynthesis seems to be controlled primarily by regulation of HisG enzymatic activity. The polypeptide is ATP phosphoribosyltransferase (Lachnospira eligens (strain ATCC 27750 / DSM 3376 / VPI C15-48 / C15-B4) (Eubacterium eligens)).